Here is a 176-residue protein sequence, read N- to C-terminus: Ribosome maturation factor RimM (176 aa).

Residues 101–173 (EGEYYHYRLI…RMVVDLPEGL (73 aa)) enclose the PRC barrel domain.

Belongs to the RimM family. In terms of assembly, binds ribosomal protein uS19.

Its subcellular location is the cytoplasm. Functionally, an accessory protein needed during the final step in the assembly of 30S ribosomal subunit, possibly for assembly of the head region. Essential for efficient processing of 16S rRNA. May be needed both before and after RbfA during the maturation of 16S rRNA. It has affinity for free ribosomal 30S subunits but not for 70S ribosomes. This Syntrophobacter fumaroxidans (strain DSM 10017 / MPOB) protein is Ribosome maturation factor RimM.